The primary structure comprises 452 residues: Maltoporin (452 aa).

An N-terminal signal peptide occupies residues 1-25 (MMITLRKLPLAVAVAAGVMSAQAMA).

It belongs to the porin LamB (TC 1.B.3) family. Homotrimer formed of three 18-stranded antiparallel beta-barrels, containing three independent channels.

The protein localises to the cell outer membrane. The catalysed reaction is beta-maltose(in) = beta-maltose(out). Involved in the transport of maltose and maltodextrins. The chain is Maltoporin from Salmonella heidelberg (strain SL476).